A 215-amino-acid polypeptide reads, in one-letter code: Sodium channel regulatory subunit beta-3 (215 aa).

Residues 1 to 22 (MPAFNRLFPLASLVLIYWVSVC) form the signal peptide. The Extracellular portion of the chain corresponds to 23–156 (FPVCVEVPSE…EEAGEDFTSV (134 aa)). Disulfide bonds link C26/C48 and C45/C120. An Ig-like C2-type domain is found at 32 to 154 (ETEAVQGNPM…VTEEAGEDFT (123 aa)). N-linked (GlcNAc...) asparagine glycans are attached at residues N95, N109, N113, and N121. Residues 157–178 (VSEIMMYILLVFLTLWLLIEMI) traverse the membrane as a helical segment. The Cytoplasmic segment spans residues 179–215 (YCYRKVSKAEEAAQENASDYLAIPSENKENSAVPVEE).

It belongs to the sodium channel auxiliary subunit SCN3B (TC 8.A.17) family. As to quaternary structure, a voltage-gated sodium (Nav) channel consists of an ion-conducting pore-forming alpha subunit functional on its own that is regulated by one or more beta subunits. Forms homodimers and homotrimers. SCN3B is non-covalently associated with alpha subunits and induces the formation of alpha subunit oligomers, including trimers. Interacts with SCN5A/Nav1.5; regulatory subunit of SCN5A/Nav1.5. Interacts with SCN7A/Nav2.1; probable regulatory subunit of SCN7A/Nav2.1. Interacts with SCN10A; regulatory subunit of SCN10A/Nav1.8. Interacts with NFASC; probably involved in targeting the sodium channels to the nodes of Ranvier. Post-translationally, intramolecular disulfide bonds favor the voltage-gated sodium channel oligomeric complex assembly. In terms of processing, N-glycosylated. Expressed in the atrium.

The protein resides in the cell membrane. In terms of biological role, regulatory subunit of multiple voltage-gated sodium (Nav) channels directly mediating the depolarization of excitable membranes. Navs, also called VGSCs (voltage-gated sodium channels) or VDSCs (voltage-dependent sodium channels), operate by switching between closed and open conformations depending on the voltage difference across the membrane. In the open conformation they allow Na(+) ions to selectively pass through the pore, along their electrochemical gradient. The influx of Na+ ions provokes membrane depolarization, initiating the propagation of electrical signals throughout cells and tissues. The accessory beta subunits participate in localization and functional modulation of the Nav channels. Modulates the activity of SCN2A/Nav1.2, causing a hyperpolarizing shift in the voltage-dependence of inactivation of the channel and increasing the fraction of channels operating in the fast gating mode. Modulates the activity of SCN5A/Nav1.5. Could also regulate the atypical sodium channel SCN7A/Nav2.1. Modulates the activity of SCN10A/Nav1.8, regulating its oligomerization and accelerating the recovery from inactivation. The sequence is that of Sodium channel regulatory subunit beta-3 from Homo sapiens (Human).